We begin with the raw amino-acid sequence, 1093 residues long: NACHT, LRR and PYD domains-containing protein 14 (1093 aa).

The 97-residue stretch at 1-97 (MADSSSSSFF…CERAKEEINW (97 aa)) folds into the Pyrin domain. Residues 102 to 121 (IGPDDAKAGETQEDQEAVLG) form a disordered region. The 323-residue stretch at 177 to 499 (QIVVLQGAAG…MFYMLKGSWE (323 aa)) folds into the NACHT domain. 183–190 (GAAGVGKT) lines the ATP pocket. LRR repeat units lie at residues 730-750 (NLMH…KSLC), 759-780 (KLQT…NISN), 787-807 (SLIF…QLLC), 816-836 (YLER…EYLS), 844-864 (RLTH…KLMS), 873-894 (TLKS…YLST), 901-921 (SLTH…KLLC), 930-951 (NLQD…DLAS), 958-978 (NLRS…KILC), 987-1008 (NIQR…DLSS), and 1015-1035 (RLIK…VKLY).

It belongs to the NLRP family. In terms of tissue distribution, testis-specific.

The protein resides in the cytoplasm. Its function is as follows. May be involved in inflammation and spermatogenesis. This Homo sapiens (Human) protein is NACHT, LRR and PYD domains-containing protein 14 (NLRP14).